Reading from the N-terminus, the 729-residue chain is Adenosylcobalamin-dependent ribonucleoside-triphosphate reductase (729 aa).

Cysteine 189 and cysteine 438 are oxidised to a cystine. Catalysis depends on residues cysteine 427 and glutamate 429.

The protein belongs to the class II ribonucleoside-triphosphate reductase family. In terms of assembly, monomer. It depends on adenosylcob(III)alamin as a cofactor.

It catalyses the reaction a 2'-deoxyribonucleoside 5'-triphosphate + [thioredoxin]-disulfide + H2O = a ribonucleoside 5'-triphosphate + [thioredoxin]-dithiol. This is Adenosylcobalamin-dependent ribonucleoside-triphosphate reductase (rnr) from Euglena gracilis.